A 185-amino-acid polypeptide reads, in one-letter code: Protein GrpE (185 aa).

The segment at 1–37 (MSEEKQTPEQEAEVEAQEEAVQADTEEVTQDEQSAFQ) is disordered.

It belongs to the GrpE family. In terms of assembly, homodimer.

Its subcellular location is the cytoplasm. In terms of biological role, participates actively in the response to hyperosmotic and heat shock by preventing the aggregation of stress-denatured proteins, in association with DnaK and GrpE. It is the nucleotide exchange factor for DnaK and may function as a thermosensor. Unfolded proteins bind initially to DnaJ; upon interaction with the DnaJ-bound protein, DnaK hydrolyzes its bound ATP, resulting in the formation of a stable complex. GrpE releases ADP from DnaK; ATP binding to DnaK triggers the release of the substrate protein, thus completing the reaction cycle. Several rounds of ATP-dependent interactions between DnaJ, DnaK and GrpE are required for fully efficient folding. The chain is Protein GrpE from Bacillus pumilus (strain SAFR-032).